A 216-amino-acid polypeptide reads, in one-letter code: Adenylate kinase (216 aa).

Position 10–15 (10–15 (GAGKGT)) interacts with ATP. The segment at 30–59 (STGDMFRAAMKAETEMGLQAKSFIDKGALV) is NMP. AMP is bound by residues threonine 31, arginine 36, 57 to 59 (ALV), 85 to 88 (GFPR), and glutamine 92. Residues 126-163 (GRRICKECGATYHLEFNPPAKADVCDKCGGELYQRSDD) are LID. Residue arginine 127 coordinates ATP. Zn(2+) contacts are provided by cysteine 130 and cysteine 133. An ATP-binding site is contributed by 136–137 (TY). Residues cysteine 150 and cysteine 153 each contribute to the Zn(2+) site. The AMP site is built by arginine 160 and arginine 171. Residue glutamine 199 coordinates ATP.

It belongs to the adenylate kinase family. In terms of assembly, monomer.

The protein resides in the cytoplasm. It carries out the reaction AMP + ATP = 2 ADP. It functions in the pathway purine metabolism; AMP biosynthesis via salvage pathway; AMP from ADP: step 1/1. In terms of biological role, catalyzes the reversible transfer of the terminal phosphate group between ATP and AMP. Plays an important role in cellular energy homeostasis and in adenine nucleotide metabolism. The protein is Adenylate kinase of Bacillus cereus (strain B4264).